We begin with the raw amino-acid sequence, 97 residues long: Secreted transmembrane peptide 4 (97 aa).

A signal peptide spans 1 to 33 (MTKNMTKKKMGLMSPNIAAFVLPMLLVLFTISS). An SCOOP motif motif is present at residues 54–67 (IVFTPPSSSCGGSP). A SxS motif essential for MIK2 binding motif is present at residues 60–62 (SSS). Residues 75–97 (WMPRRPCRRTRPPGTNIPVSQSP) are disordered.

Belongs to the serine rich endogenous peptide (SCOOP) phytocytokine family. In terms of assembly, interacts with MIK2 (via extracellular leucine-rich repeat domain); this interaction triggers the formation of complex between MIK2 and the BAK1/SERK3 and SERK4 coreceptors, and subsequent BAK1 activation by phosphorylation. In terms of tissue distribution, mostly expressed in leaves and stems, and, to a lower extent, in roots, siliques, seeds and flowers.

The protein resides in the cell membrane. Its subcellular location is the secreted. It is found in the extracellular space. The protein localises to the apoplast. In terms of biological role, brassicaceae-specific phytocytokine (plant endogenous peptide released into the apoplast) perceived by MIK2 in a BAK1/SERK3 and SERK4 coreceptors-dependent manner, that modulates various physiological and antimicrobial processes including growth prevention and reactive oxygen species (ROS) response regulation. Prevents general growth and development. The protein is Secreted transmembrane peptide 4 of Arabidopsis thaliana (Mouse-ear cress).